The primary structure comprises 543 residues: CTP synthase (543 aa).

The segment at 1 to 265 (MTRYIFVTGG…DDFVVERFGL (265 aa)) is amidoligase domain. Serine 13 lines the CTP pocket. Residue serine 13 participates in UTP binding. Residues 14–19 (SLGKGI) and aspartate 71 each bind ATP. The Mg(2+) site is built by aspartate 71 and glutamate 139. CTP contacts are provided by residues 146-148 (DIE), 186-191 (KTKPTQ), and lysine 222. UTP contacts are provided by residues 186–191 (KTKPTQ) and lysine 222. Positions 290–541 (TIAMVGKYME…VKAALAQHQK (252 aa)) constitute a Glutamine amidotransferase type-1 domain. Residue glycine 351 coordinates L-glutamine. The Nucleophile; for glutamine hydrolysis role is filled by cysteine 378. L-glutamine is bound by residues 379–382 (LGMQ), glutamate 402, and arginine 469. Catalysis depends on residues histidine 514 and glutamate 516.

This sequence belongs to the CTP synthase family. In terms of assembly, homotetramer.

The enzyme catalyses UTP + L-glutamine + ATP + H2O = CTP + L-glutamate + ADP + phosphate + 2 H(+). It carries out the reaction L-glutamine + H2O = L-glutamate + NH4(+). It catalyses the reaction UTP + NH4(+) + ATP = CTP + ADP + phosphate + 2 H(+). It participates in pyrimidine metabolism; CTP biosynthesis via de novo pathway; CTP from UDP: step 2/2. Allosterically activated by GTP, when glutamine is the substrate; GTP has no effect on the reaction when ammonia is the substrate. The allosteric effector GTP functions by stabilizing the protein conformation that binds the tetrahedral intermediate(s) formed during glutamine hydrolysis. Inhibited by the product CTP, via allosteric rather than competitive inhibition. Catalyzes the ATP-dependent amination of UTP to CTP with either L-glutamine or ammonia as the source of nitrogen. Regulates intracellular CTP levels through interactions with the four ribonucleotide triphosphates. The sequence is that of CTP synthase from Pseudomonas fluorescens (strain Pf0-1).